The sequence spans 296 residues: Short-chain dehydrogenase/reductase ascJ (296 aa).

3 residues coordinate NADP(+): I28, D66, and N93. S155 acts as the Proton donor in catalysis. 3 residues coordinate NADP(+): Y168, K172, and T205. Y168 functions as the Proton acceptor in the catalytic mechanism. The active-site Lowers pKa of active site Tyr is K172.

It belongs to the short-chain dehydrogenases/reductases (SDR) family.

The enzyme catalyses ascofuranol + A = ascofuranone + AH2. Its pathway is secondary metabolite biosynthesis; terpenoid biosynthesis. Functionally, short-chain dehydrogenase/reductase; part of the asc-2 gene cluster that mediates the biosynthesis of ascofuranone, a strong inhibitor of cyanide-insensitive alternative oxidases and a promising drug candidate against African trypanosomiasis. The first step in the pathway is performed by the non-reducing polyketide synthase ascC that produces orsellinic acid by condensing acetyl-CoA with 3 malonyl-CoA units. Orsellinic acid is then prenylated by the prenyltransferase ascA to yield ilicicolinic acid B. Ilicicolinic acid B is further reduced to ilicicolin B by the reductase ascB. The halogenase ascD then chlorinates ilicicolin B to produce ilicicolin A which is converted to ilicicolin A epoxide by the cytochrome P450 monooxygenase ascE that catalyzes stereoselective epoxidation of the terminal double bond of the prenyl group. Ilicicolin A epoxide is the last common precursor for the biosynthesis of ascofuranone and ascochlorin. The terpene cyclase ascF produces a monocyclic terpene, and the cyclization reaction is proposed to be initiated by protonation of the terminal epoxide of ilicicolin A epoxide to generate a monocyclic tertiarycation, which is followed by a series of hydride and methyl shifts with abstraction of proton, leading to the formation of the (14S,15R,19R)-trimethylcyclohexanone ring structure of ilicicolin C, which is finally reduced to ascochlorin by the dehydrogenase ascG. On the other hand, ilicicolin A epoxide is hydroxylated by the cytochrome P450 monooxygenase ascH, and the resultant product is cyclized by the terpene cyclase ascI to ascofuranol via protonation-initiated epoxide ring opening, which facilitates the 6-endo-tet cyclization to form the tetrahy-drofuran ring. Finally, ascofuranol is oxidized into ascofuranone by ascJ. This Acremonium egyptiacum (Oospora egyptiaca) protein is Short-chain dehydrogenase/reductase ascJ.